Here is a 368-residue protein sequence, read N- to C-terminus: Glutamate 5-kinase (368 aa).

Position 9 (K9) interacts with ATP. Substrate-binding residues include S49, D136, and N148. ATP-binding positions include 168–169 (TD) and 210–216 (TGGMMTK). The 79-residue stretch at 275 to 353 (AGIITIDNGA…ADIENVLGYE (79 aa)) folds into the PUA domain.

This sequence belongs to the glutamate 5-kinase family.

It is found in the cytoplasm. It catalyses the reaction L-glutamate + ATP = L-glutamyl 5-phosphate + ADP. It functions in the pathway amino-acid biosynthesis; L-proline biosynthesis; L-glutamate 5-semialdehyde from L-glutamate: step 1/2. Its function is as follows. Catalyzes the transfer of a phosphate group to glutamate to form L-glutamate 5-phosphate. This is Glutamate 5-kinase from Haemophilus influenzae (strain ATCC 51907 / DSM 11121 / KW20 / Rd).